The sequence spans 218 residues: MNSPDQIPFNTQLYTPPAQPITSTDYFSKKGNAPKLAVDVDLEPRTVPSFSHRHTEVTKYISPVDKLSPDVETPAEVGPANFIPNMSQYRFLLVDDNSINLKILTKILLRLYPRAHIVELCDSTSVLAYLASTPPFDCVFLDIEMPVVSGTELAYRIRQSPKLCRLPLIAVTTRTQEEDLAQYKDVGIDWTFGKPFNYPYRVVLDVVDNVLRQRINEL.

Positions 90–209 constitute a Response regulatory domain; it reads RFLLVDDNSI…YRVVLDVVDN (120 aa). The residue at position 142 (Asp-142) is a 4-aspartylphosphate.

In terms of biological role, required for stress adaptation, morphogenesis and virulence. The protein is Stress response regulator protein 1 (SRR1) of Meyerozyma guilliermondii (strain ATCC 6260 / CBS 566 / DSM 6381 / JCM 1539 / NBRC 10279 / NRRL Y-324) (Yeast).